A 66-amino-acid chain; its full sequence is Neurotoxin BmK AGP-SYPU1 (66 aa).

One can recognise an LCN-type CS-alpha/beta domain in the interval 2–64; it reads RDAYIAQNYN…KPIRIPGKCH (63 aa). 4 disulfides stabilise this stretch: C12–C63, C16–C36, C22–C46, and C26–C48. Positions 65-66 are cleaved as a propeptide — removed by a carboxypeptidase; it reads RR.

As to expression, expressed by the venom gland.

It localises to the secreted. Alpha toxins bind voltage-independently at site-3 of sodium channels (Nav) and inhibit the inactivation of the activated channels, thereby blocking neuronal transmission. This toxin has a strong analgesic effect when administered to mice by intraperitoneal injection. This Olivierus martensii (Manchurian scorpion) protein is Neurotoxin BmK AGP-SYPU1.